Consider the following 425-residue polypeptide: 2-methylserine hydroxymethyltransferase (425 aa).

(6S)-5,6,7,8-tetrahydrofolate is bound by residues L126 and 130–132 (GHL). K235 carries the N6-(pyridoxal phosphate)lysine modification. A (6S)-5,6,7,8-tetrahydrofolate-binding site is contributed by E251.

This sequence belongs to the SHMT family. In terms of assembly, homodimer. The cofactor is pyridoxal 5'-phosphate.

The protein resides in the cytoplasm. It carries out the reaction (6R)-5,10-methylene-5,6,7,8-tetrahydrofolate + D-alanine + H2O = 2-methylserine + (6S)-5,6,7,8-tetrahydrofolate. The protein operates within one-carbon metabolism; tetrahydrofolate interconversion. In terms of biological role, catalyzes the reversible interconversion of alpha-methyl-L-serine to D-alanine with tetrahydrofolate (THF) serving as the one-carbon carrier. Cannot use alpha-methyl-D-serine, L-serine, D-serine or L-alanine. This Ensifer sp protein is 2-methylserine hydroxymethyltransferase.